A 238-amino-acid chain; its full sequence is Purine nucleoside phosphorylase DeoD-type (238 aa).

H4 is a binding site for a purine D-ribonucleoside. Phosphate-binding positions include G20, R24, R43, and 87–90; that span reads RVGS. A purine D-ribonucleoside is bound by residues 179–181 and 203–204; these read EME and SD. The active-site Proton donor is the D204.

It belongs to the PNP/UDP phosphorylase family. Homohexamer; trimer of homodimers.

It carries out the reaction a purine D-ribonucleoside + phosphate = a purine nucleobase + alpha-D-ribose 1-phosphate. The catalysed reaction is a purine 2'-deoxy-D-ribonucleoside + phosphate = a purine nucleobase + 2-deoxy-alpha-D-ribose 1-phosphate. Functionally, catalyzes the reversible phosphorolytic breakdown of the N-glycosidic bond in the beta-(deoxy)ribonucleoside molecules, with the formation of the corresponding free purine bases and pentose-1-phosphate. In Haemophilus ducreyi (strain 35000HP / ATCC 700724), this protein is Purine nucleoside phosphorylase DeoD-type.